A 562-amino-acid chain; its full sequence is Glucose-6-phosphate isomerase (562 aa).

The Proton donor role is filled by Glu-370. Active-site residues include His-401 and Lys-526.

Belongs to the GPI family.

Its subcellular location is the cytoplasm. It catalyses the reaction alpha-D-glucose 6-phosphate = beta-D-fructose 6-phosphate. Its pathway is carbohydrate biosynthesis; gluconeogenesis. The protein operates within carbohydrate degradation; glycolysis; D-glyceraldehyde 3-phosphate and glycerone phosphate from D-glucose: step 2/4. Its function is as follows. Catalyzes the reversible isomerization of glucose-6-phosphate to fructose-6-phosphate. The chain is Glucose-6-phosphate isomerase from Deinococcus geothermalis (strain DSM 11300 / CIP 105573 / AG-3a).